Here is a 354-residue protein sequence, read N- to C-terminus: Peptide chain release factor 1 (354 aa).

Gln-230 is modified (N5-methylglutamine).

This sequence belongs to the prokaryotic/mitochondrial release factor family. Methylated by PrmC. Methylation increases the termination efficiency of RF1.

The protein resides in the cytoplasm. Its function is as follows. Peptide chain release factor 1 directs the termination of translation in response to the peptide chain termination codons UAG and UAA. The sequence is that of Peptide chain release factor 1 from Leptospira interrogans serogroup Icterohaemorrhagiae serovar copenhageni (strain Fiocruz L1-130).